Reading from the N-terminus, the 349-residue chain is MSNKPSLSYKDAGVDIDAGDALVQRIKSVAKATSRPEVVGGLGGFGALCRIPTGYTSPLLVSGTDGVGTKLKLALQLNRHDTIGIDLVAMCVNDLLVCGAEPLFFLDYYATGKLDVDVAATVVTGIGEGCKLSNCALIGGETAEMPGMYQDDDYDLAGFCVGVVEEAEVITGENVAEGDVLIALASSGAHSNGYSLVRKVIEVSGVDVTSSNEQLDGQSIQDALMAPTRIYVKAIKALQDTLGSSALHAMSHITGGGLTDNLPRVLPETLAASIDTNSWQFSELFTWLQNQGNIEQSEMYRTFNCGVGFVIVVPKDKAEAAIQTLNDAGEKAWKLGEMVKREADAVVYR.

The protein belongs to the AIR synthase family.

The protein localises to the cytoplasm. The enzyme catalyses 2-formamido-N(1)-(5-O-phospho-beta-D-ribosyl)acetamidine + ATP = 5-amino-1-(5-phospho-beta-D-ribosyl)imidazole + ADP + phosphate + H(+). Its pathway is purine metabolism; IMP biosynthesis via de novo pathway; 5-amino-1-(5-phospho-D-ribosyl)imidazole from N(2)-formyl-N(1)-(5-phospho-D-ribosyl)glycinamide: step 2/2. The polypeptide is Phosphoribosylformylglycinamidine cyclo-ligase (Psychrobacter cryohalolentis (strain ATCC BAA-1226 / DSM 17306 / VKM B-2378 / K5)).